The sequence spans 129 residues: Membrane protein 0 (129 aa).

Residues 1–25 (MATVHYSRRPGTPPVTLTSSPSMDD) form a disordered region. The short motif at 44-47 (PPPY) is the PPXY motif element. A helical membrane pass occupies residues 100 to 120 (FLILFGILTLTAVVVAIVAVF).

Belongs to the varicellovirus ORF0 protein family. Interacts with host ITCH; this interaction probably mediates ITCH degradation.

Its subcellular location is the host Golgi apparatus membrane. In Homo sapiens (Human), this protein is Membrane protein 0.